Here is a 273-residue protein sequence, read N- to C-terminus: MAIHLSKTSSPSTRNGAVNSQVKSNSRNRLISGQHHCGKGRNPRGIITAGHRGGGHKRLYRKIDFRRNEKDIYGRIITIEYDPNRNAHICLIHYGDGEKRYILHPKAIIGDTIVYGTEVPIKMGNALPLTDMPLGTAIHNIEITLGKGGQLARAAGAVAKLIAKEGKSATLKLPSGEVRLISKNCSATVGQVGNVGVNQKSLGRVGAKRWRGKRPVVRGVVMNPVDHPHGGGEGRAPIGRKKPSTPWGYPALGRRTRKSNKYSDNLILRRRSK.

A compositionally biased stretch (polar residues) spans 1–31; sequence MAIHLSKTSSPSTRNGAVNSQVKSNSRNRLI. 2 disordered regions span residues 1-53 and 222-273; these read MAIH…GHRG and MNPV…RRSK.

It belongs to the universal ribosomal protein uL2 family. Part of the 50S ribosomal subunit.

It is found in the plastid. The protein localises to the chloroplast. This Pisum sativum (Garden pea) protein is Large ribosomal subunit protein uL2c (rpl2).